The sequence spans 579 residues: Tyrosine 3-monooxygenase (579 aa).

A compositionally biased stretch (acidic residues) spans Val105–Gln114. Residues Val105–Asp132 form a disordered region. His409, His414, and Glu454 together coordinate Fe cation.

It belongs to the biopterin-dependent aromatic amino acid hydroxylase family. Requires Fe(2+) as cofactor.

The protein resides in the cytoplasm. It localises to the perinuclear region. The protein localises to the cell projection. Its subcellular location is the axon. It carries out the reaction (6R)-L-erythro-5,6,7,8-tetrahydrobiopterin + L-tyrosine + O2 = (4aS,6R)-4a-hydroxy-L-erythro-5,6,7,8-tetrahydrobiopterin + L-dopa. It functions in the pathway catecholamine biosynthesis; dopamine biosynthesis; dopamine from L-tyrosine: step 1/2. Phosphorylation leads to an increase in the catalytic activity. Its function is as follows. Plays an important role in the physiology of adrenergic neurons. The polypeptide is Tyrosine 3-monooxygenase (ple) (Drosophila melanogaster (Fruit fly)).